Here is a 156-residue protein sequence, read N- to C-terminus: Small ribosomal subunit protein uS7 (156 aa).

This sequence belongs to the universal ribosomal protein uS7 family. In terms of assembly, part of the 30S ribosomal subunit. Contacts proteins S9 and S11.

In terms of biological role, one of the primary rRNA binding proteins, it binds directly to 16S rRNA where it nucleates assembly of the head domain of the 30S subunit. Is located at the subunit interface close to the decoding center, probably blocks exit of the E-site tRNA. The chain is Small ribosomal subunit protein uS7 from Synechococcus sp. (strain RCC307).